Reading from the N-terminus, the 555-residue chain is HERV-H_2q24.1 provirus ancestral Env polyprotein (555 aa).

An N-terminal signal peptide occupies residues Met1–Pro35. Residues Leu36–Val515 lie on the Extracellular side of the membrane. Asn47 carries N-linked (GlcNAc...) asparagine glycosylation. The short motif at Cys64–Cys67 is the CXXC element. Asn222, Asn265, Asn283, Asn352, and Asn370 each carry an N-linked (GlcNAc...) asparagine glycan. Residues Val388 to Ser408 form a fusion peptide region. Asn475 carries an N-linked (GlcNAc...) asparagine glycan. The helical transmembrane segment at Leu516–Phe536 threads the bilayer. The Cytoplasmic segment spans residues His537–Ile555.

This sequence belongs to the gamma type-C retroviral envelope protein family. HERV class-I H env subfamily. As to quaternary structure, the surface (SU) and transmembrane (TM) proteins form a heterodimer. SU and TM are attached by noncovalent interactions or by a labile interchain disulfide bond. In terms of processing, specific enzymatic cleavages in vivo yield the mature SU and TM proteins. In terms of tissue distribution, low expression in testis.

The protein resides in the virion. It is found in the cell membrane. Retroviral envelope proteins mediate receptor recognition and membrane fusion during early infection. Endogenous envelope proteins may have kept, lost or modified their original function during evolution. This endogenous envelope protein has lost its original fusogenic properties. In terms of biological role, SU mediates receptor recognition. Its function is as follows. TM anchors the envelope heterodimer to the viral membrane through one transmembrane domain. The other hydrophobic domain, called fusion peptide, mediates fusion of the viral membrane with the target cell membrane. This is HERV-H_2q24.1 provirus ancestral Env polyprotein from Homo sapiens (Human).